We begin with the raw amino-acid sequence, 590 residues long: Ras-specific guanine nucleotide-releasing factor RalGPS2 (590 aa).

Positions 49 to 287 (TPEEYAGQIT…YKLSLKIEPG (239 aa)) constitute a Ras-GEF domain. The disordered stretch occupies residues 288–319 (ASTPRSAASREDLAGPDIGASPQGGRKSSAAA). Residues Ser293, Ser296, and Ser308 each carry the phosphoserine modification. Residues 331 to 334 (PQTP) carry the PXXP motif. A Phosphothreonine modification is found at Thr333. Phosphoserine occurs at positions 336 and 350. Thr368 carries the post-translational modification Phosphothreonine. Residues 380-413 (DSVMEPHAPSRGQAESSTLSSGISIGSSDGSELS) are disordered. Ser381 is subject to Phosphoserine. Residues 394-410 (ESSTLSSGISIGSSDGS) are compositionally biased toward low complexity. Ser429 bears the Phosphoserine mark. One can recognise a PH domain in the interval 464–576 (AVTIQGVLRR…WFKHLSAACQ (113 aa)). Residues 466–590 (TIQGVLRRKT…QVPTNLMTFE (125 aa)) form a required for stimulation of nucleotide exchange by RALA region.

As to quaternary structure, interacts with RALA. Interacts with the SH3 domains of GRB2 and PLCG1. In terms of tissue distribution, abundant in brain and testis.

It is found in the cytoplasm. Its subcellular location is the cell membrane. Guanine nucleotide exchange factor for the small GTPase RALA. May be involved in cytoskeletal organization. May also be involved in the stimulation of transcription in a Ras-independent fashion. In Mus musculus (Mouse), this protein is Ras-specific guanine nucleotide-releasing factor RalGPS2 (Ralgps2).